A 335-amino-acid chain; its full sequence is Ketol-acid reductoisomerase (NADP(+)) (335 aa).

Positions 5–185 constitute a KARI N-terminal Rossmann domain; that stretch reads SKIYTDKDSN…GATRAGVIPT (181 aa). Residues 28–31, Ser-56, and 86–89 contribute to the NADP(+) site; these read YGSQ and DMVQ. His-111 is a catalytic residue. Gly-137 lines the NADP(+) pocket. The KARI C-terminal knotted domain maps to 186–331; it reads TFKEETETDL…NQLKDLIQKG (146 aa). Mg(2+) is bound by residues Asp-194, Glu-198, Glu-230, and Glu-234. Residue Ser-255 participates in substrate binding.

It belongs to the ketol-acid reductoisomerase family. It depends on Mg(2+) as a cofactor.

The enzyme catalyses (2R)-2,3-dihydroxy-3-methylbutanoate + NADP(+) = (2S)-2-acetolactate + NADPH + H(+). The catalysed reaction is (2R,3R)-2,3-dihydroxy-3-methylpentanoate + NADP(+) = (S)-2-ethyl-2-hydroxy-3-oxobutanoate + NADPH + H(+). Its pathway is amino-acid biosynthesis; L-isoleucine biosynthesis; L-isoleucine from 2-oxobutanoate: step 2/4. It participates in amino-acid biosynthesis; L-valine biosynthesis; L-valine from pyruvate: step 2/4. Involved in the biosynthesis of branched-chain amino acids (BCAA). Catalyzes an alkyl-migration followed by a ketol-acid reduction of (S)-2-acetolactate (S2AL) to yield (R)-2,3-dihydroxy-isovalerate. In the isomerase reaction, S2AL is rearranged via a Mg-dependent methyl migration to produce 3-hydroxy-3-methyl-2-ketobutyrate (HMKB). In the reductase reaction, this 2-ketoacid undergoes a metal-dependent reduction by NADPH to yield (R)-2,3-dihydroxy-isovalerate. The protein is Ketol-acid reductoisomerase (NADP(+)) of Saccharolobus islandicus (strain Y.G.57.14 / Yellowstone #1) (Sulfolobus islandicus).